The chain runs to 119 residues: Secreted RxLR effector protein RXLR-C04 (119 aa).

An N-terminal signal peptide occupies residues 1–22 (MRLSYIFVVVATIITNCDIASA). The RxLR-dEER signature appears at 40-77 (RILRQTNDSDDLEPIRHAMLDMELLEKIAKDPKYAEEV). N46 carries N-linked (GlcNAc...) asparagine glycosylation.

This sequence belongs to the RxLR effector family.

The protein localises to the secreted. It localises to the host cytoplasm. Its subcellular location is the host nucleus. In terms of biological role, secreted effector that suppresses pattern-triggered immunity (PTI) in plant host. This chain is Secreted RxLR effector protein RXLR-C04, found in Plasmopara halstedii (Downy mildew of sunflower).